Consider the following 676-residue polypeptide: Serine/threonine-protein kinase Haspin homolog ALK2 (676 aa).

The segment at 53-93 is disordered; sequence HKGSAEDESQSFFTSSDSPTSKTRPVGKTIENDDYYGKRSS. Residues 62 to 75 show a composition bias toward polar residues; that stretch reads QSFFTSSDSPTSKT. Residues 116–118 carry the KEN box motif; that stretch reads KEN. The D box signature appears at 150–158; sequence RTPLRPISN. Positions 228-312 are disordered; the sequence is SSRSVNDQDP…HKTSHSSLNK (85 aa). A compositionally biased stretch (polar residues) spans 232–259; that stretch reads VNDQDPNFVQPKPTNSLQKKSSISSFHN. The Protein kinase domain occupies 383-672; the sequence is LCDVKYILHD…TCGDLLSLKG (290 aa). ATP-binding positions include 389-397 and K430; that span reads ILHDLREAQ.

The protein belongs to the protein kinase superfamily. Ser/Thr protein kinase family. Haspin subfamily. In terms of processing, periodically phosphorylated during the cell cycle with a phosphorylation peak during mitosis and hyperphosphorylated after DNA damage.

The enzyme catalyses L-seryl-[protein] + ATP = O-phospho-L-seryl-[protein] + ADP + H(+). It carries out the reaction L-threonyl-[protein] + ATP = O-phospho-L-threonyl-[protein] + ADP + H(+). In terms of biological role, serine/threonine haspin-like protein kinase involved in cell cycle regulation. This chain is Serine/threonine-protein kinase Haspin homolog ALK2 (ALK2), found in Saccharomyces cerevisiae (strain ATCC 204508 / S288c) (Baker's yeast).